Reading from the N-terminus, the 200-residue chain is Recombination protein RecR (200 aa).

A C4-type zinc finger spans residues 59–74 (CEKCNTFTEAQICEVC). In terms of domain architecture, Toprim spans 82-177 (ALLCVVETPA…AVTRLARGVP (96 aa)).

The protein belongs to the RecR family.

Functionally, may play a role in DNA repair. It seems to be involved in an RecBC-independent recombinational process of DNA repair. It may act with RecF and RecO. The chain is Recombination protein RecR from Burkholderia mallei (strain NCTC 10247).